Consider the following 86-residue polypeptide: MKTLLLTLVVVTILCLDLGYTLTCLTHESLFFETTETCSDGQNLCYAKWFAVFPGARRPDGGCAATCPDKVPLEIVNCCTTDKCNL.

A signal peptide spans 1–21 (MKTLLLTLVVVTILCLDLGYT). 4 cysteine pairs are disulfide-bonded: C24–C45, C38–C63, C67–C78, and C79–C84.

This sequence belongs to the three-finger toxin family. Short-chain subfamily. Aminergic toxin sub-subfamily. In terms of assembly, monomer. As to expression, expressed by the venom gland.

It is found in the secreted. Its function is as follows. Binds to the muscarinic acetylcholine receptor (CHRM). This Ophiophagus hannah (King cobra) protein is Muscarinic toxin MTX6.